The primary structure comprises 91 residues: Small ribosomal subunit protein uS19 (91 aa).

This sequence belongs to the universal ribosomal protein uS19 family.

Its function is as follows. Protein S19 forms a complex with S13 that binds strongly to the 16S ribosomal RNA. The chain is Small ribosomal subunit protein uS19 from Pseudomonas fluorescens (strain SBW25).